A 330-amino-acid chain; its full sequence is Ketol-acid reductoisomerase (NADP(+)) (330 aa).

One can recognise a KARI N-terminal Rossmann domain in the interval Leu-3–Thr-184. Residues Tyr-26–Gln-29, Ser-52, and Ser-54 each bind NADP(+). His-109 is a catalytic residue. An NADP(+)-binding site is contributed by Gly-135. In terms of domain architecture, KARI C-terminal knotted spans Ser-185–Lys-329. Residues Asp-193, Glu-197, Glu-229, and Glu-233 each coordinate Mg(2+). Substrate is bound at residue Ser-254.

Belongs to the ketol-acid reductoisomerase family. The cofactor is Mg(2+).

The enzyme catalyses (2R)-2,3-dihydroxy-3-methylbutanoate + NADP(+) = (2S)-2-acetolactate + NADPH + H(+). It carries out the reaction (2R,3R)-2,3-dihydroxy-3-methylpentanoate + NADP(+) = (S)-2-ethyl-2-hydroxy-3-oxobutanoate + NADPH + H(+). It functions in the pathway amino-acid biosynthesis; L-isoleucine biosynthesis; L-isoleucine from 2-oxobutanoate: step 2/4. The protein operates within amino-acid biosynthesis; L-valine biosynthesis; L-valine from pyruvate: step 2/4. Functionally, involved in the biosynthesis of branched-chain amino acids (BCAA). Catalyzes an alkyl-migration followed by a ketol-acid reduction of (S)-2-acetolactate (S2AL) to yield (R)-2,3-dihydroxy-isovalerate. In the isomerase reaction, S2AL is rearranged via a Mg-dependent methyl migration to produce 3-hydroxy-3-methyl-2-ketobutyrate (HMKB). In the reductase reaction, this 2-ketoacid undergoes a metal-dependent reduction by NADPH to yield (R)-2,3-dihydroxy-isovalerate. The protein is Ketol-acid reductoisomerase (NADP(+)) of Helicobacter pylori (strain ATCC 700392 / 26695) (Campylobacter pylori).